The chain runs to 232 residues: uncharacterized protein (232 aa).

The disordered stretch occupies residues 119–145; it reads DEEYRENSKAPEAKARPSFVGEGRRLG. The segment covering 123–133 has biased composition (basic and acidic residues); the sequence is RENSKAPEAKA.

This is an uncharacterized protein from Encephalitozoon cuniculi (strain GB-M1) (Microsporidian parasite).